A 330-amino-acid chain; its full sequence is MIKVAIVGGSGYIGGELIRLLAMHPEVEIVAVTSREYAGKKVHKVHPNLRGLNLRFTSDYNFDADVIFLAVPHGVSMKLINEFLGSAKIIDLSADFRVRKELYEKYYGKHERPELIEDFVYGLPEIHRKEIKKAELVANPGCNATAVILALYPFKDLTKEVLVDLKVSSSAGGRRENLPSIHPERSNVVRVYKPYHHRHEAEVLQETGVRAMFTVHSVDIVRGLLATIYFTFEGNEKDLLKRMLIYKDEPFIRLVVDKGGLQRYPDPKYVLGSNFVDLGLAYDEENSRVIVFSALDNLIKGGAGQAVQNMNIMFGLDETLGLGYYPLYPV.

10–13 contacts NADP(+); it reads SGYI. C142 is a catalytic residue. Residue N297 participates in NADP(+) binding.

Belongs to the NAGSA dehydrogenase family. Type 1 subfamily. LysY sub-subfamily.

It localises to the cytoplasm. It carries out the reaction [amino-group carrier protein]-C-terminal-N-(1-carboxy-5-oxopentan-1-yl)-L-glutamine + phosphate + NADP(+) = [amino-group carrier protein]-C-terminal-N-(1-carboxy-5-phosphooxy-5-oxopentan-1-yl)-L-glutamine + NADPH + H(+). It catalyses the reaction [amino-group carrier protein]-C-terminal-gamma-(L-glutamyl-5-semialdehyde)-L-glutamate + phosphate + NADP(+) = [amino-group carrier protein]-C-terminal-gamma-(5-phospho-L-glutamyl)-L-glutamate + NADPH + H(+). It functions in the pathway amino-acid biosynthesis; L-lysine biosynthesis via AAA pathway; L-lysine from L-alpha-aminoadipate (Thermus route): step 3/5. Its pathway is amino-acid biosynthesis; L-arginine biosynthesis. Functionally, involved in both the arginine and lysine biosynthetic pathways. In Pyrococcus horikoshii (strain ATCC 700860 / DSM 12428 / JCM 9974 / NBRC 100139 / OT-3), this protein is Putative [LysW]-L-2-aminoadipate/[LysW]-L-glutamate phosphate reductase.